The primary structure comprises 429 residues: Cyclin-B2-1 (429 aa).

The protein belongs to the cyclin family. Cyclin AB subfamily. As to quaternary structure, interacts with CDC20-1 and CDC20-2. As to expression, expressed in roots, stems, leaves, flowers and siliques.

In Arabidopsis thaliana (Mouse-ear cress), this protein is Cyclin-B2-1 (CYCB2-1).